The primary structure comprises 310 residues: Putative HTH-type transcriptional regulatory protein YN1551_1579 (310 aa).

The HTH cro/C1-type domain occupies 125–180 (LKHKREEMGYSIGDVAKFLGVSRKAIYDYEKGDSDVSLEVAEKLIDLFGDDIIGDV). The H-T-H motif DNA-binding region spans 136–155 (IGDVAKFLGVSRKAIYDYEK).

The chain is Putative HTH-type transcriptional regulatory protein YN1551_1579 from Saccharolobus islandicus (strain Y.N.15.51 / Yellowstone #2) (Sulfolobus islandicus).